A 294-amino-acid polypeptide reads, in one-letter code: Flavin-dependent thymidylate synthase (294 aa).

Residues 27-250 (GFIRVIDYMG…PFTYEAFEEY (224 aa)) form the ThyX domain. FAD contacts are provided by residues T73, 96–98 (RHR), and E104. Residues 93–96 (QWIR), 104–108 (EYSAR), and R189 contribute to the dUMP site. Residues 96-106 (RHRTASVNEYS) carry the ThyX motif motif. Residues 205 to 207 (NLH) and H211 contribute to the FAD site. A dUMP-binding site is contributed by R216. The active-site Involved in ionization of N3 of dUMP, leading to its activation is R216.

Belongs to the thymidylate synthase ThyX family. Homotetramer. FAD is required as a cofactor.

It catalyses the reaction dUMP + (6R)-5,10-methylene-5,6,7,8-tetrahydrofolate + NADPH + H(+) = dTMP + (6S)-5,6,7,8-tetrahydrofolate + NADP(+). The protein operates within pyrimidine metabolism; dTTP biosynthesis. Catalyzes the reductive methylation of 2'-deoxyuridine-5'-monophosphate (dUMP) to 2'-deoxythymidine-5'-monophosphate (dTMP) while utilizing 5,10-methylenetetrahydrofolate (mTHF) as the methyl donor, and NADPH and FADH(2) as the reductant. The sequence is that of Flavin-dependent thymidylate synthase from Rickettsia typhi (strain ATCC VR-144 / Wilmington).